The following is a 641-amino-acid chain: Probable serine protease FE772_23065 (641 aa).

The chain crosses the membrane as a helical span at residues 532 to 552 (WVELIAILAAAGWIRVMLIGL).

The protein belongs to the peptidase S1 family.

The protein localises to the cell inner membrane. Its function is as follows. Possibly a dedicated protease for substrate gasdermin bGSDM; cleaves the bGSDM precursor, releasing the pore-forming moiety, which integrates into the membrane and triggers cell death. Involved in defense against bacteriophages. When this probable 4 gene operon (bGSDM-FE772_23060-FE772_23065-FE772_23070) is inserted into E.coli it provides nearly 100-fold protection against phages T5 and T6 and about 8-fold against phage T4. The operon without bGSDM no longer protects against phage. The chain is Probable serine protease FE772_23065 from Lysobacter enzymogenes.